Consider the following 793-residue polypeptide: 3',5'-cyclic-nucleotide phosphodiesterase regA (793 aa).

The segment at 1–153 (MNNKQEEIDQ…SSHRVSDFSD (153 aa)) is disordered. Low complexity-rich tracts occupy residues 13 to 34 (SSTSTSPSPSSSSSPSNNDSTS), 54 to 69 (NKNNNNNNNNNNSNNN), and 80 to 121 (NNSS…NNNN). Residues 161–280 (RILVADDDDV…LLKKKIDTVL (120 aa)) form the Response regulatory domain. At Asp-212 the chain carries 4-aspartylphosphate. The PDEase domain maps to 410–733 (RRNSIPTFPQ…ENWQAYMELQ (324 aa)). The Proton donor role is filled by His-487. Residues His-491, His-527, Asp-528, and Asp-639 each contribute to the a divalent metal cation site. The segment at 756–793 (KLPKIDEEENRDKVSSSSSSSTAPLTSTSSSNNETSSS) is disordered. Residues 770 to 793 (SSSSSSSTAPLTSTSSSNNETSSS) show a composition bias toward low complexity.

This sequence belongs to the cyclic nucleotide phosphodiesterase family. A divalent metal cation serves as cofactor. In terms of processing, the phosphorelay mechanism involves the sequential transfer of a phosphate group from Asp-212 of pde2 to 'His-65' of rdeA. Phosphorylation of Asp-212 activates the phosphodiesterase domain.

The protein resides in the cytoplasm. It is found in the cytosol. The enzyme catalyses 3',5'-cyclic AMP + H2O = AMP + H(+). With respect to regulation, inhibited by 3-isobutyl-1-methylxanthine (IBMX). Its function is as follows. Phosphodiesterase specific for cAMP. Involved in the degradation of intracellular cAMP. Morphological suppressor of tagB. Phosphorelay protein that accepts phosphate from rdeA or supplies phosphate from regA; depending on the relative concentration of the phosphodonor proteins. In Dictyostelium discoideum (Social amoeba), this protein is 3',5'-cyclic-nucleotide phosphodiesterase regA (regA).